Reading from the N-terminus, the 627-residue chain is Glucokinase regulatory protein (627 aa).

SIS domains follow at residues 90 to 286 (VQEV…QGVV) and 320 to 499 (VGIS…LLGK). Beta-D-fructose 1-phosphate is bound by residues 109–110 (TS), glutamate 153, and 179–181 (SVG). 109–110 (TS) provides a ligand contact to beta-D-fructose 6-phosphate. A beta-D-fructose 6-phosphate-binding site is contributed by 179–181 (SVG). An important for interaction with GCK region spans residues 199–200 (AV). Beta-D-fructose 1-phosphate is bound at residue glutamate 348. The segment at 463 to 465 (LLF) is essential for interaction with GCK. Lysine 514 is a beta-D-fructose 1-phosphate binding site. Lysine 514 is a binding site for beta-D-fructose 6-phosphate.

The protein belongs to the GCKR family. Interacts (fructose 6-phosphate bound form) with GCK. In terms of tissue distribution, detected in liver (at protein level). Not detected in muscle, brain, heart, testis, intestine or spleen.

Its subcellular location is the cytoplasm. The protein localises to the nucleus. It is found in the mitochondrion. Regulates glucokinase (GCK) by forming an inactive complex with this enzyme. Acts by promoting GCK recruitment to the nucleus, possibly to provide a reserve of GCK that can be quickly released in the cytoplasm after a meal. The affinity of GCKR for GCK is modulated by fructose metabolites: GCKR with bound fructose 6-phosphate has increased affinity for GCK, while GCKR with bound fructose 1-phosphate has strongly decreased affinity for GCK and does not inhibit GCK activity. This Rattus norvegicus (Rat) protein is Glucokinase regulatory protein.